We begin with the raw amino-acid sequence, 126 residues long: MSVVYKKKKRNVVVGVVYIHATYNNIIVTVTDQQGHSLICTSAGACGFKGSKKATPYAAQETASHAVKTVVEQNGMKTVSIKVSGPGAGRESAIRAVQACNLNVTSIKDTTKLPHNGCKLPGRRRV.

Belongs to the universal ribosomal protein uS11 family. Part of the 30S ribosomal subunit. Interacts with proteins S7 and S18. Binds to IF-3.

Functionally, located on the platform of the 30S subunit, it bridges several disparate RNA helices of the 16S rRNA. Forms part of the Shine-Dalgarno cleft in the 70S ribosome. This chain is Small ribosomal subunit protein uS11, found in Ehrlichia chaffeensis (strain ATCC CRL-10679 / Arkansas).